A 227-amino-acid chain; its full sequence is Endolytic peptidoglycan transglycosylase RlpA (227 aa).

An N-terminal signal peptide occupies residues 1–21 (MMNHKFVLLILLIFYCFFLSG). The N-palmitoyl cysteine moiety is linked to residue Cys22. Cys22 is lipidated: S-diacylglycerol cysteine.

The protein belongs to the RlpA family.

The protein resides in the cell membrane. Its function is as follows. Lytic transglycosylase with a strong preference for naked glycan strands that lack stem peptides. This is Endolytic peptidoglycan transglycosylase RlpA from Rickettsia bellii (strain RML369-C).